The following is a 578-amino-acid chain: Phosphoenolpyruvate-protein phosphotransferase (578 aa).

Residue H195 is the Tele-phosphohistidine intermediate of the active site. Positions 302 and 338 each coordinate phosphoenolpyruvate. The Mg(2+) site is built by E437 and D461. Phosphoenolpyruvate contacts are provided by residues N460 to D461 and R471. The active-site Proton donor is the C508.

Belongs to the PEP-utilizing enzyme family. Homodimer. Mg(2+) is required as a cofactor.

The protein localises to the cytoplasm. It carries out the reaction L-histidyl-[protein] + phosphoenolpyruvate = N(pros)-phospho-L-histidyl-[protein] + pyruvate. In terms of biological role, general (non sugar-specific) component of the phosphoenolpyruvate-dependent sugar phosphotransferase system (sugar PTS). This major carbohydrate active-transport system catalyzes the phosphorylation of incoming sugar substrates concomitantly with their translocation across the cell membrane. Enzyme I transfers the phosphoryl group from phosphoenolpyruvate (PEP) to the phosphoryl carrier protein (HPr). This chain is Phosphoenolpyruvate-protein phosphotransferase (ptsI), found in Bacillus sp. (strain S).